A 241-amino-acid polypeptide reads, in one-letter code: Ribonuclease PH (241 aa).

Phosphate-binding positions include Arg87 and 125–127 (GTR).

It belongs to the RNase PH family. As to quaternary structure, homohexameric ring arranged as a trimer of dimers.

It catalyses the reaction tRNA(n+1) + phosphate = tRNA(n) + a ribonucleoside 5'-diphosphate. In terms of biological role, phosphorolytic 3'-5' exoribonuclease that plays an important role in tRNA 3'-end maturation. Removes nucleotide residues following the 3'-CCA terminus of tRNAs; can also add nucleotides to the ends of RNA molecules by using nucleoside diphosphates as substrates, but this may not be physiologically important. Probably plays a role in initiation of 16S rRNA degradation (leading to ribosome degradation) during starvation. The protein is Ribonuclease PH of Salinispora arenicola (strain CNS-205).